A 285-amino-acid chain; its full sequence is Gas vesicle protein C2 (285 aa).

6 consecutive repeat copies span residues Glu22 to Arg52, Ala53 to Ala84, Ala85 to Thr122, Thr123 to Gln155, Glu156 to Ala188, and Ala189 to Val220. A 6 X approximate tandem repeats region spans residues Glu22–Val220.

Belongs to the halobacterial gas vesicle GvpC family.

It is found in the gas vesicle. In terms of biological role, confers stability, involved in shaping gas vesicles (GV), hollow, gas filled proteinaceous nanostructures. GVs allow positioning of halobacteria at an optimal depth for growth in the poorly aerated, shallow brine pools of their habitat. Its function is as follows. Expression of 2 c-vac DNA fragments containing 2 divergently transcribed regions (gvpE-gvpF-gvpG-gvpH-gvpI-gvpJ-gvpK-gvpL-gvpM and gvpA-gvpC-gvpN-gvpO) allows H.volcanii to produce gas vesicles. The protein is Gas vesicle protein C2 of Halobacterium salinarum (strain ATCC 700922 / JCM 11081 / NRC-1) (Halobacterium halobium).